The primary structure comprises 343 residues: Protein SOSEKI 4 (343 aa).

The tract at residues 18–109 (RIVPVVYYLS…YVLKGSQILD (92 aa)) is DIX-like oligomerization domain. The interval 148-194 (RKLSMDASTQTDDRRRRKSPVDEVNEVTELSREEITSPPQSDSSPET) is disordered. Positions 184-194 (SPPQSDSSPET) are enriched in polar residues. The Association to cell membranes motif lies at 233 to 234 (CG).

It belongs to the SOSEKI family. In terms of assembly, homodimer. Forms long polymer filaments with other SOKs proteins polymers (e.g. SOK1, SOK2, SOK3 and SOK4) crucial for polar localization and biological activity. Binds to ANGUSTIFOLIA (AN). As to expression, expressed during embryogenesis and in roots.

The protein resides in the cell membrane. Functionally, SOSEKI proteins (SOK1-5) locally interpret global polarity cues and can influence cell division orientation to coordinate cell polarization relative to body axes, probably by guiding ANGUSTIFOLIA (AN) polarized localization. Positive regulator of auxin (indole-3-acetic acid, IAA) biosynthesis and signaling pathway leading to the modulation of seedling growth, plant and inflorescence development. Negative regulator of stress responses (e.g. salinity and osmotic stress). The sequence is that of Protein SOSEKI 4 from Arabidopsis thaliana (Mouse-ear cress).